The primary structure comprises 329 residues: Ankyrin repeat and SOCS box protein 5 (329 aa).

ANK repeat units follow at residues 69–98 (ADRS…NVNA), 102–131 (DHIT…NVNA), 135–164 (DGVT…KAQL), 167–196 (CLPS…DVDQ), 200–229 (HLGT…DVQK), and 232–261 (YWDT…DINA). The 52-residue stretch at 278–329 (MVERILLQHEATPSSLCQLCRLCIRNYIGRPRLHLIPQLQLPTLLQNFLQYR) folds into the SOCS box domain.

It belongs to the ankyrin SOCS box (ASB) family. In terms of tissue distribution, expressed in endothelial and smooth muscle cells of collateral arteries as well as in satellite cells.

Its pathway is protein modification; protein ubiquitination. Functionally, may be a substrate-recognition component of a SCF-like ECS (Elongin-Cullin-SOCS-box protein) E3 ubiquitin-protein ligase complex which mediates the ubiquitination and subsequent proteasomal degradation of target proteins. May play a role in the initiation of arteriogenesis. The sequence is that of Ankyrin repeat and SOCS box protein 5 (ASB5) from Oryctolagus cuniculus (Rabbit).